Consider the following 197-residue polypeptide: Phospholipid hydroperoxide glutathione peroxidase (197 aa).

Phosphoserine is present on Ser40. Residue Sec73 is part of the active site. Residue Sec73 is a non-standard amino acid, selenocysteine.

The protein belongs to the glutathione peroxidase family. Monomer. Has a tendency to form higher mass oligomers. Interacts with FUNDC1; this interaction promotes GPX4 recruitment into mitochondria through TOM/TIM complex where it is degraded by mitophagy.

It localises to the mitochondrion. Its subcellular location is the cytoplasm. The enzyme catalyses a hydroperoxy polyunsaturated fatty acid + 2 glutathione = a hydroxy polyunsaturated fatty acid + glutathione disulfide + H2O. It catalyses the reaction 2 glutathione + H2O2 = glutathione disulfide + 2 H2O. It carries out the reaction tert-butyl hydroperoxide + 2 glutathione = tert-butanol + glutathione disulfide + H2O. The catalysed reaction is cumene hydroperoxide + 2 glutathione = 2-phenylpropan-2-ol + glutathione disulfide + H2O. The enzyme catalyses (9S)-hydroperoxy-(10E,12Z)-octadecadienoate + 2 glutathione = (9S)-hydroxy-(10E,12Z)-octadecadienoate + glutathione disulfide + H2O. It catalyses the reaction (13S)-hydroperoxy-(9Z,11E)-octadecadienoate + 2 glutathione = (13S)-hydroxy-(9Z,11E)-octadecadienoate + glutathione disulfide + H2O. It carries out the reaction (5S)-hydroperoxy-(6E,8Z,11Z,14Z)-eicosatetraenoate + 2 glutathione = (5S)-hydroxy-(6E,8Z,11Z,14Z)-eicosatetraenoate + glutathione disulfide + H2O. The catalysed reaction is (12R)-hydroperoxy-(5Z,8Z,10E,14Z)-eicosatetraenoate + 2 glutathione = (12R)-hydroxy-(5Z,8Z,10E,14Z)-eicosatetraenoate + glutathione disulfide + H2O. The enzyme catalyses (12S)-hydroperoxy-(5Z,8Z,10E,14Z)-eicosatetraenoate + 2 glutathione = (12S)-hydroxy-(5Z,8Z,10E,14Z)-eicosatetraenoate + glutathione disulfide + H2O. It catalyses the reaction (15S)-hydroperoxy-(5Z,8Z,11Z,13E)-eicosatetraenoate + 2 glutathione = (15S)-hydroxy-(5Z,8Z,11Z,13E)-eicosatetraenoate + glutathione disulfide + H2O. It carries out the reaction (5S)-hydroperoxy-(6E,8Z,11Z,14Z,17Z)-eicosapentaenoate + 2 glutathione = (5S)-hydroxy-(6E,8Z,11Z,14Z,17Z)-eicosapentaenoate + glutathione disulfide + H2O. The catalysed reaction is (12S)-hydroperoxy-(5Z,8Z,10E,14Z,17Z)-eicosapentaenoate + 2 glutathione = (12S)-hydroxy-(5Z,8Z,10E,14Z,17Z)-eicosapentaenoate + glutathione disulfide + H2O. The enzyme catalyses (15S)-hydroperoxy-(5Z,8Z,11Z,13E,17Z)-eicosapentaenoate + 2 glutathione = (15S)-hydroxy-(5Z,8Z,11Z,13E,17Z)-eicosapentaenoate + glutathione disulfide + H2O. It catalyses the reaction (15S)-hydroperoxy-(11Z,13E)-eicosadienoate + 2 glutathione = (15S)-hydroxy-(11Z,13E)-eicosadienoate + glutathione disulfide + H2O. It carries out the reaction (17S)-hydroperoxy-(4Z,7Z,10Z,13Z,15E,19Z)-docosahexaenoate + 2 glutathione = (17S)-hydroxy-(4Z,7Z,10Z,13Z,15E,19Z)-docosahexaenoate + glutathione disulfide + H2O. The catalysed reaction is a hydroperoxy-1,2-diacyl-glycero-3-phosphocholine + 2 glutathione = a hydroxy-1,2-diacyl-glycero-3-phosphocholine + glutathione disulfide + H2O. Essential antioxidant peroxidase that directly reduces phospholipid hydroperoxide even if they are incorporated in membranes and lipoproteins. Can also reduce fatty acid hydroperoxide, cholesterol hydroperoxide and thymine hydroperoxide. Plays a key role in protecting cells from oxidative damage by preventing membrane lipid peroxidation. Required to prevent cells from ferroptosis, a non-apoptotic cell death resulting from an iron-dependent accumulation of lipid reactive oxygen species. The presence of selenocysteine (Sec) versus Cys at the active site is essential for life: it provides resistance to overoxidation and prevents cells against ferroptosis. The presence of Sec at the active site is also essential for the survival of a specific type of parvalbumin-positive interneurons, thereby preventing against fatal epileptic seizures. May be required to protect cells from the toxicity of ingested lipid hydroperoxides. Required for normal sperm development and male fertility. Essential for maturation and survival of photoreceptor cells. Plays a role in a primary T-cell response to viral and parasitic infection by protecting T-cells from ferroptosis and by supporting T-cell expansion. Plays a role of glutathione peroxidase in platelets in the arachidonic acid metabolism. Reduces hydroperoxy ester lipids formed by a 15-lipoxygenase that may play a role as down-regulator of the cellular 15-lipoxygenase pathway. Can also reduce small soluble hydroperoxides such as H2O2, cumene hydroperoxide and tert-butyl hydroperoxide. This is Phospholipid hydroperoxide glutathione peroxidase from Bos taurus (Bovine).